The chain runs to 156 residues: Lipoprotein signal peptidase (156 aa).

3 helical membrane passes run 5–25 (FFVV…TKQW), 63–83 (IEWQ…AIIA), and 90–110 (SNPY…GNLI). Catalysis depends on residues Asp120 and Asp138. A helical transmembrane segment spans residues 133 to 153 (AFNVADMGICVGAFFVCLAVY).

It belongs to the peptidase A8 family.

It is found in the cell inner membrane. It carries out the reaction Release of signal peptides from bacterial membrane prolipoproteins. Hydrolyzes -Xaa-Yaa-Zaa-|-(S,diacylglyceryl)Cys-, in which Xaa is hydrophobic (preferably Leu), and Yaa (Ala or Ser) and Zaa (Gly or Ala) have small, neutral side chains.. It functions in the pathway protein modification; lipoprotein biosynthesis (signal peptide cleavage). This protein specifically catalyzes the removal of signal peptides from prolipoproteins. The polypeptide is Lipoprotein signal peptidase (Oleidesulfovibrio alaskensis (strain ATCC BAA-1058 / DSM 17464 / G20) (Desulfovibrio alaskensis)).